The following is a 330-amino-acid chain: MGSNQRIVITPGEPAGIGPDLVAALAQQAWPVELVICADPALLTARAQQLGLPLRLHSYRPEQPATPRPAGELTVLAIDTPAPVAAGELNVANSHYVVETLARACDSCLNGEFAALLTGPVHKGVINDGGLPFSGHTEYFAQRSGRERVVMMLATESLRVALATTHLPLLAVPGAVTRQSLDEVITILVHDLQQQFGIAQPCIYVCGLNPHAGEGGHMGREEIEVITPALDTLRAKGYNLVGPLPADTLFQPKYLQQADAVLAMYHDQGLPVLKYQGFGRAVNITLGLPFIRTSVDHGTALELAGSGQAEAGSIKTALNIAIDMIKHRNE.

Substrate-binding residues include His-136 and Thr-137. Positions 166, 211, and 266 each coordinate a divalent metal cation. Residues Lys-274, Asn-283, and Arg-292 each coordinate substrate.

It belongs to the PdxA family. In terms of assembly, homodimer. Zn(2+) is required as a cofactor. Mg(2+) serves as cofactor. The cofactor is Co(2+).

The protein localises to the cytoplasm. The catalysed reaction is 4-(phosphooxy)-L-threonine + NAD(+) = 3-amino-2-oxopropyl phosphate + CO2 + NADH. It participates in cofactor biosynthesis; pyridoxine 5'-phosphate biosynthesis; pyridoxine 5'-phosphate from D-erythrose 4-phosphate: step 4/5. Functionally, catalyzes the NAD(P)-dependent oxidation of 4-(phosphooxy)-L-threonine (HTP) into 2-amino-3-oxo-4-(phosphooxy)butyric acid which spontaneously decarboxylates to form 3-amino-2-oxopropyl phosphate (AHAP). This Sodalis glossinidius (strain morsitans) protein is 4-hydroxythreonine-4-phosphate dehydrogenase.